A 552-amino-acid polypeptide reads, in one-letter code: 5'-AMP-activated protein kinase catalytic subunit alpha-2 (552 aa).

In terms of domain architecture, Protein kinase spans 16–268 (YVLGDTLGVG…IKDIREHEWF (253 aa)). Residues 22–30 (LGVGTFGKV) and K45 contribute to the ATP site. D139 functions as the Proton acceptor in the catalytic mechanism. T172 bears the Phosphothreonine; by LKB1 and CaMKK2 mark. T258 is modified (phosphothreonine). The AIS stretch occupies residues 291–376 (EAVKEVCEKF…PERMPPLIAD (86 aa)). S377 is subject to Phosphoserine. The tract at residues 477–521 (VEQRSGSSTPQRSCSAAGLHRPRSSFDSTTAESHSLSGSLTGSLT) is disordered. Over residues 480–490 (RSGSSTPQRSC) the composition is skewed to polar residues. Residue S491 is modified to Phosphoserine. The segment covering 501–510 (SFDSTTAESH) has biased composition (polar residues). A compositionally biased stretch (low complexity) spans 511 to 521 (SLSGSLTGSLT).

It belongs to the protein kinase superfamily. CAMK Ser/Thr protein kinase family. SNF1 subfamily. AMPK is a heterotrimer of an alpha catalytic subunit (PRKAA1 or PRKAA2), a beta (PRKAB1 or PRKAB2) and a gamma non-catalytic subunits (PRKAG1, PRKAG2 or PRKAG3). Interacts with FNIP1 and FNIP2. Interacts with DUSP29. Interacts with ARF6. The phosphorylated form at Thr-172 mediated by CamKK2 interacts with ACSS2. Mg(2+) serves as cofactor. Ubiquitinated. In terms of processing, phosphorylated at Thr-172 by STK11/LKB1 in complex with STE20-related adapter-alpha (STRADA) pseudo kinase and CAB39. Also phosphorylated at Thr-172 by CAMKK2; triggered by a rise in intracellular calcium ions, without detectable changes in the AMP/ATP ratio. CAMKK1 can also phosphorylate Thr-172, but at much lower level. Dephosphorylated by protein phosphatase 2A and 2C (PP2A and PP2C). Phosphorylated by ULK1; leading to negatively regulate AMPK activity and suggesting the existence of a regulatory feedback loop between ULK1 and AMPK. Dephosphorylated by PPM1A and PPM1B at Thr-172 (mediated by STK11/LKB1).

The protein localises to the cytoplasm. It is found in the nucleus. The enzyme catalyses L-seryl-[protein] + ATP = O-phospho-L-seryl-[protein] + ADP + H(+). The catalysed reaction is L-threonyl-[protein] + ATP = O-phospho-L-threonyl-[protein] + ADP + H(+). It carries out the reaction L-seryl-[acetyl-CoA carboxylase] + ATP = O-phospho-L-seryl-[acetyl-CoA carboxylase] + ADP + H(+). It catalyses the reaction L-seryl-[3-hydroxy-3-methylglutaryl-coenzyme A reductase] + ATP = O-phospho-L-seryl-[3-hydroxy-3-methylglutaryl-coenzyme A reductase] + ADP + H(+). With respect to regulation, activated by phosphorylation on Thr-172. Binding of AMP to non-catalytic gamma subunit (PRKAG1, PRKAG2 or PRKAG3) results in allosteric activation, inducing phosphorylation on Thr-172. AMP-binding to gamma subunit also sustains activity by preventing dephosphorylation of Thr-172. ADP also stimulates Thr-172 phosphorylation, without stimulating already phosphorylated AMPK. ATP promotes dephosphorylation of Thr-172, rendering the enzyme inactive. Under physiological conditions AMPK mainly exists in its inactive form in complex with ATP, which is much more abundant than AMP. Selectively inhibited by compound C (6-[4-(2-Piperidin-1-yl-ethoxy)-phenyl)]-3-pyridin-4-yl-pyyrazolo[1,5-a] pyrimidine. Activated by resveratrol, a natural polyphenol present in red wine, and S17834, a synthetic polyphenol. Salicylate/aspirin directly activates kinase activity, primarily by inhibiting Thr-172 dephosphorylation. Functionally, catalytic subunit of AMP-activated protein kinase (AMPK), an energy sensor protein kinase that plays a key role in regulating cellular energy metabolism. In response to reduction of intracellular ATP levels, AMPK activates energy-producing pathways and inhibits energy-consuming processes: inhibits protein, carbohydrate and lipid biosynthesis, as well as cell growth and proliferation. AMPK acts via direct phosphorylation of metabolic enzymes, and by longer-term effects via phosphorylation of transcription regulators. Regulates lipid synthesis by phosphorylating and inactivating lipid metabolic enzymes such as ACACA, ACACB, GYS1, HMGCR and LIPE; regulates fatty acid and cholesterol synthesis by phosphorylating acetyl-CoA carboxylase (ACACA and ACACB) and hormone-sensitive lipase (LIPE) enzymes, respectively. Promotes lipolysis of lipid droplets by mediating phosphorylation of isoform 1 of CHKA (CHKalpha2). Regulates insulin-signaling and glycolysis by phosphorylating IRS1, PFKFB2 and PFKFB3. Involved in insulin receptor/INSR internalization. AMPK stimulates glucose uptake in muscle by increasing the translocation of the glucose transporter SLC2A4/GLUT4 to the plasma membrane, possibly by mediating phosphorylation of TBC1D4/AS160. Regulates transcription and chromatin structure by phosphorylating transcription regulators involved in energy metabolism such as CRTC2/TORC2, FOXO3, histone H2B, HDAC5, MEF2C, MLXIPL/ChREBP, EP300, HNF4A, p53/TP53, SREBF1, SREBF2 and PPARGC1A. Acts as a key regulator of glucose homeostasis in liver by phosphorylating CRTC2/TORC2, leading to CRTC2/TORC2 sequestration in the cytoplasm. In response to stress, phosphorylates 'Ser-36' of histone H2B (H2BS36ph), leading to promote transcription. Acts as a key regulator of cell growth and proliferation by phosphorylating FNIP1, TSC2, RPTOR, WDR24 and ATG1/ULK1: in response to nutrient limitation, negatively regulates the mTORC1 complex by phosphorylating RPTOR component of the mTORC1 complex and by phosphorylating and activating TSC2. Also phosphorylates and inhibits GATOR2 subunit WDR24 in response to nutrient limitation, leading to suppress glucose-mediated mTORC1 activation. In response to energetic stress, phosphorylates FNIP1, inactivating the non-canonical mTORC1 signaling, thereby promoting nuclear translocation of TFEB and TFE3, and inducing transcription of lysosomal or autophagy genes. In response to nutrient limitation, promotes autophagy by phosphorylating and activating ATG1/ULK1. In that process also activates WDR45/WIPI4. Phosphorylates CASP6, thereby preventing its autoprocessing and subsequent activation. AMPK also acts as a regulator of circadian rhythm by mediating phosphorylation of CRY1, leading to destabilize it. May regulate the Wnt signaling pathway by phosphorylating CTNNB1, leading to stabilize it. Also acts as a regulator of cellular polarity by remodeling the actin cytoskeleton; probably by indirectly activating myosin. Also phosphorylates CFTR, EEF2K, KLC1, NOS3 and SLC12A1. Plays an important role in the differential regulation of pro-autophagy (composed of PIK3C3, BECN1, PIK3R4 and UVRAG or ATG14) and non-autophagy (composed of PIK3C3, BECN1 and PIK3R4) complexes, in response to glucose starvation. Can inhibit the non-autophagy complex by phosphorylating PIK3C3 and can activate the pro-autophagy complex by phosphorylating BECN1. Upon glucose starvation, promotes ARF6 activation in a kinase-independent manner leading to cell migration. Upon glucose deprivation mediates the phosphorylation of ACSS2 at 'Ser-659', which exposes the nuclear localization signal of ACSS2, required for its interaction with KPNA1 and nuclear translocation. Upon stress, regulates mitochondrial fragmentation through phosphorylation of MTFR1L. The chain is 5'-AMP-activated protein kinase catalytic subunit alpha-2 (PRKAA2) from Pongo abelii (Sumatran orangutan).